We begin with the raw amino-acid sequence, 239 residues long: Proteasome activator complex subunit 2 (239 aa).

N-acetylalanine is present on Ala2. Ser10 carries the post-translational modification Phosphoserine. A disordered region spans residues 65–86 (DIPIPDPPPKDDEMETDKQEKK). Residues 72-86 (PPKDDEMETDKQEKK) show a composition bias toward basic and acidic residues.

This sequence belongs to the PA28 family. In terms of assembly, heterodimer of PSME1 and PSME2, which forms a hexameric ring.

Its function is as follows. Implicated in immunoproteasome assembly and required for efficient antigen processing. The PA28 activator complex enhances the generation of class I binding peptides by altering the cleavage pattern of the proteasome. The chain is Proteasome activator complex subunit 2 (PSME2) from Sus scrofa (Pig).